A 153-amino-acid chain; its full sequence is Ribosome maturation factor RimP (153 aa).

It belongs to the RimP family.

It is found in the cytoplasm. Its function is as follows. Required for maturation of 30S ribosomal subunits. This chain is Ribosome maturation factor RimP, found in Marinomonas sp. (strain MWYL1).